The chain runs to 147 residues: Urease accessory protein UreE (147 aa).

The protein belongs to the UreE family.

Its subcellular location is the cytoplasm. Involved in urease metallocenter assembly. Binds nickel. Probably functions as a nickel donor during metallocenter assembly. In Marinomonas sp. (strain MWYL1), this protein is Urease accessory protein UreE.